A 117-amino-acid polypeptide reads, in one-letter code: Hemerythrin subunit beta (117 aa).

Fe cation-binding residues include His24, His53, Glu57, His72, His76, His105, and Asp110.

This sequence belongs to the hemerythrin family. In terms of assembly, octamer composed of two types of chains: alpha and beta.

Its function is as follows. Hemerythrin is a respiratory protein in blood cells of certain marine worms. The oxygen-binding site in each chain contains two iron atoms. This chain is Hemerythrin subunit beta, found in Lingula reevii (Inarticulated brachiopod).